The primary structure comprises 582 residues: Proline--tRNA ligase (582 aa).

The protein belongs to the class-II aminoacyl-tRNA synthetase family. ProS type 1 subfamily. Homodimer.

It is found in the cytoplasm. The enzyme catalyses tRNA(Pro) + L-proline + ATP = L-prolyl-tRNA(Pro) + AMP + diphosphate. In terms of biological role, catalyzes the attachment of proline to tRNA(Pro) in a two-step reaction: proline is first activated by ATP to form Pro-AMP and then transferred to the acceptor end of tRNA(Pro). As ProRS can inadvertently accommodate and process non-cognate amino acids such as alanine and cysteine, to avoid such errors it has two additional distinct editing activities against alanine. One activity is designated as 'pretransfer' editing and involves the tRNA(Pro)-independent hydrolysis of activated Ala-AMP. The other activity is designated 'posttransfer' editing and involves deacylation of mischarged Ala-tRNA(Pro). The misacylated Cys-tRNA(Pro) is not edited by ProRS. The chain is Proline--tRNA ligase from Mycobacterium bovis (strain ATCC BAA-935 / AF2122/97).